The primary structure comprises 427 residues: Glutamate-1-semialdehyde 2,1-aminomutase (427 aa).

Lys-265 carries the post-translational modification N6-(pyridoxal phosphate)lysine.

Belongs to the class-III pyridoxal-phosphate-dependent aminotransferase family. HemL subfamily. In terms of assembly, homodimer. Requires pyridoxal 5'-phosphate as cofactor.

The protein localises to the cytoplasm. It carries out the reaction (S)-4-amino-5-oxopentanoate = 5-aminolevulinate. It participates in porphyrin-containing compound metabolism; protoporphyrin-IX biosynthesis; 5-aminolevulinate from L-glutamyl-tRNA(Glu): step 2/2. The polypeptide is Glutamate-1-semialdehyde 2,1-aminomutase (Bordetella parapertussis (strain 12822 / ATCC BAA-587 / NCTC 13253)).